The following is a 240-amino-acid chain: Endo-chitosanase B (240 aa).

The first 17 residues, 1 to 17 (MRLSEILAVALVTGATA), serve as a signal peptide directing secretion. An N-linked (GlcNAc...) asparagine glycan is attached at Asn-86.

It belongs to the glycosyl hydrolase 75 family.

Its subcellular location is the secreted. It catalyses the reaction Endohydrolysis of beta-(1-&gt;4)-linkages between D-glucosamine residues in a partly acetylated chitosan.. Chitosanase catalyzing the endo-type cleavage of chitosan, the deacylated form of chitin. Chitosanase may be crucial in the degradation of the deacetylated portion of chitin in the fungal cell wall. Chitoolisaccharides produced by the hydrolysis of partially N-acetylated chitosan are known to have many biological activities, including antibacterial activity, immune-enhancing effects, and elicitor activity. In Aspergillus oryzae (Yellow koji mold), this protein is Endo-chitosanase B (csnB).